We begin with the raw amino-acid sequence, 124 residues long: BLOC-1-related complex subunit 8 (124 aa).

The segment at 102-124 (SSSQGRSAVINPNETPAHTSVTP) is disordered.

This sequence belongs to the BORCS8 family.

It is found in the lysosome membrane. Functionally, as part of a BORC-like complex, it may play a role in the movement and localization of lysosomes at the cell periphery. Associated with the cytosolic face of lysosomes, this complex may couple lysosomes to microtubule plus-end-directed kinesin motors, driving lysosome movement toward the cell periphery. The polypeptide is BLOC-1-related complex subunit 8 (Danio rerio (Zebrafish)).